Consider the following 276-residue polypeptide: Large ribosomal subunit protein uL2 (276 aa).

2 disordered regions span residues 29–55 and 219–276; these read PEKSLTTYKHSRQGRNNRGVITSRHRG and HVRG…RRTR. Basic residues predominate over residues 259-276; sequence TRNKKKQSSKLIVRRRTR.

The protein belongs to the universal ribosomal protein uL2 family. In terms of assembly, part of the 50S ribosomal subunit. Forms a bridge to the 30S subunit in the 70S ribosome.

One of the primary rRNA binding proteins. Required for association of the 30S and 50S subunits to form the 70S ribosome, for tRNA binding and peptide bond formation. It has been suggested to have peptidyltransferase activity; this is somewhat controversial. Makes several contacts with the 16S rRNA in the 70S ribosome. In Rippkaea orientalis (strain PCC 8801 / RF-1) (Cyanothece sp. (strain PCC 8801)), this protein is Large ribosomal subunit protein uL2.